A 120-amino-acid chain; its full sequence is Large ribosomal subunit protein uL18 (120 aa).

It belongs to the universal ribosomal protein uL18 family. In terms of assembly, part of the 50S ribosomal subunit; part of the 5S rRNA/L5/L18/L25 subcomplex. Contacts the 5S and 23S rRNAs.

Its function is as follows. This is one of the proteins that bind and probably mediate the attachment of the 5S RNA into the large ribosomal subunit, where it forms part of the central protuberance. The sequence is that of Large ribosomal subunit protein uL18 from Rippkaea orientalis (strain PCC 8801 / RF-1) (Cyanothece sp. (strain PCC 8801)).